Reading from the N-terminus, the 188-residue chain is C-type lectin domain family 5 member A (188 aa).

Residues 1 to 4 lie on the Cytoplasmic side of the membrane; it reads MNWH. A helical; Signal-anchor for type II membrane protein membrane pass occupies residues 5-27; the sequence is MIISGLIVVVLKVVGMTLFLLYF. At 28 to 188 the chain is on the extracellular side; the sequence is PQIFNKSNDG…YRRICEKNAK (161 aa). Residue N32 is glycosylated (N-linked (GlcNAc...) asparagine). The cysteines at positions 71 and 82 are disulfide-linked. Residues 78 to 184 enclose the C-type lectin domain; sequence YQARCFFLST…CDISYRRICE (107 aa). N-linked (GlcNAc...) asparagine glycans are attached at residues N93, N144, and N151. Intrachain disulfides connect C99–C183 and C161–C175.

Monomer. Homodimer. The majority of CLEC5A is expressed as a monomeric form on macrophages. Interacts with TYROBP/DAP12. The interaction with TYROBP is required for CLEC5A cell surface expression. Interacts with HCST/DAP10. Forms a CLEC5A/TYROBP/HCST trimolecular complex depending almost solely on TYROBP. As to quaternary structure, (Microbial infection) Interacts with dengue virus envelope protein E. In terms of processing, N-glycosylated. Contains sialic acid residues. In terms of tissue distribution, highly expressed in bone marrow with lower levels in synovium, lung and bronchus. Expressed in peripheral blood monocytes and in the monocyte/macrophage cell lines U-937 and Mono-Mac-6, but not in cell lines of other origins. Expression is down-regulated when monocytes differentiate into dendritic cells.

The protein localises to the cell membrane. Its function is as follows. Functions as a positive regulator of osteoclastogenesis. Cell surface receptor that signals via TYROBP. Regulates inflammatory responses. (Microbial infection) Critical macrophage receptor for dengue virus serotypes 1-4. The binding of dengue virus to CLEC5A triggers signaling through the phosphorylation of TYROBP. This interaction does not result in viral entry, but stimulates pro-inflammatory cytokine release. This is C-type lectin domain family 5 member A (CLEC5A) from Homo sapiens (Human).